The primary structure comprises 136 residues: MATFTTEQAGYQMQAILQVIGYDLLIVVTGGTNPHIGDVTTLTASTVPETVKFPSHDGRFHKDNFISERMAKRIQRYLAGSCTITAGIHVNQITKAQIAAAAPMTDDLSRQIISWLQAHPVQAEKPEYYGQDEQPR.

This sequence belongs to the CinA family.

Its function is as follows. Probably involved in tannin degradation, however the precise biochemical function in metabolism of gallate is unknown. In Lactiplantibacillus plantarum (strain ATCC BAA-793 / NCIMB 8826 / WCFS1) (Lactobacillus plantarum), this protein is Protein LpdD.